The sequence spans 324 residues: Glutaminase 2 (324 aa).

Residues Ser-75, Asn-127, Glu-171, Asn-178, Tyr-202, Tyr-254, and Val-272 each coordinate substrate.

It belongs to the glutaminase family. As to quaternary structure, homotetramer.

It carries out the reaction L-glutamine + H2O = L-glutamate + NH4(+). This Halalkalibacterium halodurans (strain ATCC BAA-125 / DSM 18197 / FERM 7344 / JCM 9153 / C-125) (Bacillus halodurans) protein is Glutaminase 2.